The sequence spans 295 residues: Porphobilinogen deaminase (295 aa).

Position 241 is an S-(dipyrrolylmethanemethyl)cysteine (Cys241).

The protein belongs to the HMBS family. In terms of assembly, monomer. Dipyrromethane is required as a cofactor.

The enzyme catalyses 4 porphobilinogen + H2O = hydroxymethylbilane + 4 NH4(+). It functions in the pathway porphyrin-containing compound metabolism; protoporphyrin-IX biosynthesis; coproporphyrinogen-III from 5-aminolevulinate: step 2/4. Its function is as follows. Tetrapolymerization of the monopyrrole PBG into the hydroxymethylbilane pre-uroporphyrinogen in several discrete steps. The protein is Porphobilinogen deaminase of Lachnospira eligens (strain ATCC 27750 / DSM 3376 / VPI C15-48 / C15-B4) (Eubacterium eligens).